The chain runs to 936 residues: Myocardin-related transcription factor A (936 aa).

3 RPEL repeats span residues 15 to 40, 59 to 84, and 103 to 128; these read TVLQLKLQQRRTREELENQGIMPPLK, DYLKRKIRSRPERAELVRMHILEETS, and DDLNEKISQRPGPMELVVKNILPVET. Residues 62–100 carry the Bipartite Nuclear localization signal motif; the sequence is KRKIRSRPERAELVRMHILEETSAEPSLQAKQIKLKRAR. Disordered regions lie at residues 146–185, 234–258, and 401–422; these read SSFDEDSSDALSPEQPASQESQGSIPSPIENRPSETTQIP, SQPKPSFEKSQRIKKPKEPKPKVKK, and SQDPSTATAASAKPTPVQQAKP. The span at 160 to 170 shows a compositional bias: polar residues; sequence QPASQESQGSI. The segment covering 239–254 has biased composition (basic and acidic residues); the sequence is SFEKSQRIKKPKEPKP. The SAP domain maps to 368–402; that stretch reads LDEMKVAELKLELKHRGLPVSGTKIDLIERLKASQ. Residues 404–416 show a composition bias toward low complexity; it reads PSTATAASAKPTP. The stretch at 497-542 forms a coiled coil; sequence DARDKDLMLREKDRQIEELTQRLKQKQELVERLRQQLEQEKRTPQH. Residues 707 to 755 form a disordered region; that stretch reads HNESPATPPQQPEPEPPPHSIFLTHSSPQWSKNPPGYDEAMKQQPNSCE. Over residues 712–725 the composition is skewed to pro residues; that stretch reads ATPPQQPEPEPPPH. A compositionally biased stretch (polar residues) spans 729 to 738; that stretch reads LTHSSPQWSK.

Interacts with srf, forming the srf-mrtfa nuclear complex which binds the 5'-CArG-3' consensus motif (CArG box) on DNA via srf. Interacts (via RPEL repeats) with globular actin (G-actin), thereby regulating its subcellular location and activity of the complex formed with srf.

Its subcellular location is the cytoplasm. The protein localises to the nucleus. Transcription coactivator that associates with the serum response factor (srf) transcription factor to control expression of genes regulating the cytoskeleton during development, morphogenesis and cell migration. The srf-mrtfa complex activity responds to Rho GTPase-induced changes in cellular globular actin (G-actin) concentration, thereby coupling cytoskeletal gene expression to cytoskeletal dynamics. Mrtfa binds G-actin via its RPEL repeats, regulating activity of the mrtfa-srf complex. Activity is also regulated by filamentous actin (F-actin) in the nucleus. The chain is Myocardin-related transcription factor A (mrtfa) from Xenopus laevis (African clawed frog).